The sequence spans 529 residues: Peptide chain release factor 3 (529 aa).

The tr-type G domain occupies 11–280 (NKRRTFAIIS…GLTKWAPTPL (270 aa)). GTP is bound by residues 20-27 (SHPDAGKT), 88-92 (DTPGH), and 142-145 (NKCD).

It belongs to the TRAFAC class translation factor GTPase superfamily. Classic translation factor GTPase family. PrfC subfamily.

The protein resides in the cytoplasm. Increases the formation of ribosomal termination complexes and stimulates activities of RF-1 and RF-2. It binds guanine nucleotides and has strong preference for UGA stop codons. It may interact directly with the ribosome. The stimulation of RF-1 and RF-2 is significantly reduced by GTP and GDP, but not by GMP. This Pseudoalteromonas translucida (strain TAC 125) protein is Peptide chain release factor 3.